A 417-amino-acid polypeptide reads, in one-letter code: Serine hydroxymethyltransferase (417 aa).

(6S)-5,6,7,8-tetrahydrofolate contacts are provided by residues leucine 121 and 125 to 127 (GHL). An N6-(pyridoxal phosphate)lysine modification is found at lysine 230. Residue 355 to 357 (SPF) coordinates (6S)-5,6,7,8-tetrahydrofolate.

It belongs to the SHMT family. In terms of assembly, homodimer. It depends on pyridoxal 5'-phosphate as a cofactor.

It localises to the cytoplasm. The enzyme catalyses (6R)-5,10-methylene-5,6,7,8-tetrahydrofolate + glycine + H2O = (6S)-5,6,7,8-tetrahydrofolate + L-serine. Its pathway is one-carbon metabolism; tetrahydrofolate interconversion. It functions in the pathway amino-acid biosynthesis; glycine biosynthesis; glycine from L-serine: step 1/1. Functionally, catalyzes the reversible interconversion of serine and glycine with tetrahydrofolate (THF) serving as the one-carbon carrier. This reaction serves as the major source of one-carbon groups required for the biosynthesis of purines, thymidylate, methionine, and other important biomolecules. Also exhibits THF-independent aldolase activity toward beta-hydroxyamino acids, producing glycine and aldehydes, via a retro-aldol mechanism. This is Serine hydroxymethyltransferase from Ruthia magnifica subsp. Calyptogena magnifica.